The chain runs to 143 residues: MAKKIIGFIKLQIPAGKANPSPPVGPALGQRGLNIMEFCKAFNAQTQALEPGLPTPVVITAFADKSFTFVLKTPPATVLIKKAAKIDKGSSKPHTDKVGKITRAQAEDIAKTKMPDLTAADLDAAVRTIAGSARSMGITVEGV.

The protein belongs to the universal ribosomal protein uL11 family. As to quaternary structure, part of the ribosomal stalk of the 50S ribosomal subunit. Interacts with L10 and the large rRNA to form the base of the stalk. L10 forms an elongated spine to which L12 dimers bind in a sequential fashion forming a multimeric L10(L12)X complex. One or more lysine residues are methylated.

Its function is as follows. Forms part of the ribosomal stalk which helps the ribosome interact with GTP-bound translation factors. The protein is Large ribosomal subunit protein uL11 of Paraburkholderia phytofirmans (strain DSM 17436 / LMG 22146 / PsJN) (Burkholderia phytofirmans).